The following is a 440-amino-acid chain: Transposon Ty1-JR1 Gag polyprotein (440 aa).

Positions 1–16 are enriched in low complexity; that stretch reads MESQQLSQHSHISHGS. Disordered regions lie at residues 1-93, 126-173, and 352-440; these read MESQ…MMTQ, PQSQ…RPPP, and GSRN…PGTY. 2 stretches are compositionally biased toward polar residues: residues 48-60 and 127-152; these read TKAN…TPAS and QSQF…GNTF. Low complexity predominate over residues 153-165; that stretch reads TDSSSADSDMTST. The RNA-binding stretch occupies residues 299-401; the sequence is NNGIHINNKV…NSKSKTARAH (103 aa). Positions 402-418 are enriched in low complexity; the sequence is NVSTSNNSPSTDNDSIS. S416 carries the post-translational modification Phosphoserine. Over residues 419 to 428 the composition is skewed to polar residues; the sequence is KSTTEPIQLN. Over residues 429 to 440 the composition is skewed to basic and acidic residues; the sequence is NKHDLHLRPGTY.

As to quaternary structure, homotrimer.

It is found in the cytoplasm. Its function is as follows. Capsid protein (CA) is the structural component of the virus-like particle (VLP), forming the shell that encapsulates the retrotransposons dimeric RNA genome. The particles are assembled from trimer-clustered units and there are holes in the capsid shells that allow for the diffusion of macromolecules. CA also has nucleocapsid-like chaperone activity, promoting primer tRNA(i)-Met annealing to the multipartite primer-binding site (PBS), dimerization of Ty1 RNA and initiation of reverse transcription. The chain is Transposon Ty1-JR1 Gag polyprotein (TY1A-JR1) from Saccharomyces cerevisiae (strain ATCC 204508 / S288c) (Baker's yeast).